We begin with the raw amino-acid sequence, 495 residues long: Divinyl ether synthase CYP74M3 (495 aa).

Position 446 (Cys446) interacts with heme.

Belongs to the cytochrome P450 family. Heme serves as cofactor.

The enzyme catalyses (13S)-hydroperoxy-(9Z,11E)-octadecadienoate = etheroleate + H2O. It carries out the reaction (13S)-hydroperoxy-(9Z,11E,15Z)-octadecatrienoate = etherolenate + H2O. The protein operates within lipid metabolism; oxylipin biosynthesis. Functionally, divinyl ether synthase involved in oxylipin biosynthesis. Catalyzes the conversion of (13S)-hydroperoxy-(9Z,11E)-octadecadienoate (13-HPOD) to etheroleate and (13S)-hydroperoxy-(9Z,11E,15Z)-octadecatrienoate (13-HPOT) to etherolenate. Has no activity with the corresponding 9-hydroperoxides (9-HPOD and 9-HPOT). This is Divinyl ether synthase CYP74M3 from Selaginella moellendorffii (Spikemoss).